Consider the following 645-residue polypeptide: MLKFRIRPVRHIRCYKRHAYFLRYNHTTTPAQKLQAQIEQIPLENYRNFSIVAHVDHGKSTLSDRLLEITHVIDPNARNKQVLDKLEVERERGITIKAQTCSMFYKDKRTGKNYLLHLIDTPGHVDFRGEVSRSYASCGGAILLVDASQGIQAQTVANFYLAFSLGLKLIPVINKIDLNFTDVKQVKDQIVNNFELPEEDIIGVSAKTGLNVEELLLPAIIDRIPPPTGRPDKPFRALLVDSWYDAYLGAVLLVNIVDGSVRKNDKVICAQTKEKYEVKDIGIMYPDRTSTGTLKTGQVGYLVLGMKDSKEAKIGDTIMHLSKVNETEVLPGFEEQKPMVFVGAFPADGIEFKAMDDDMSRLVLNDRSVTLERETSNALGQGWRLGFLGSLHASVFRERLEKEYGSKLIITQPTVPYLVEFTDGKKKLITNPDEFPDGATKRVNVAAFHEPFIEAVMTLPQEYLGSVIRLCDSNRGEQIDITYLNTNGQVMLKYYLPLSHLVDDFFGKLKSVSRGFASLDYEDAGYRISDVVKLQLLVNGNAIDALSRVLHKSEVERVGREWVKKFKEYVKSQLYEVVIQARANNKIIARETIKARRKDVLQKLHASDVSRRKKLLAKQKEGKKHMKTVGNIQINQEAYQAFLRR.

The tr-type G domain occupies 44 to 228; that stretch reads ENYRNFSIVA…AIIDRIPPPT (185 aa). GTP-binding positions include 53-60, 120-124, and 174-177; these read AHVDHGKS, DTPGH, and NKID.

This sequence belongs to the TRAFAC class translation factor GTPase superfamily. Classic translation factor GTPase family. LepA subfamily.

The protein localises to the mitochondrion inner membrane. The catalysed reaction is GTP + H2O = GDP + phosphate + H(+). Its function is as follows. Promotes mitochondrial protein synthesis. May act as a fidelity factor of the translation reaction, by catalyzing a one-codon backward translocation of tRNAs on improperly translocated ribosomes. Binds to mitochondrial ribosomes in a GTP-dependent manner. The polypeptide is Translation factor GUF1, mitochondrial (Saccharomyces cerevisiae (strain ATCC 204508 / S288c) (Baker's yeast)).